Consider the following 270-residue polypeptide: Nodule lectin (270 aa).

The N-terminal stretch at 1-33 (MAFYRTNLPTRELFSLVSVVIVLLATNINSVQA) is a signal peptide. Residues 34 to 41 (LSFNFTKL) constitute a propeptide that is removed on maturation. Residue Asn134 is glycosylated (N-linked (GlcNAc...) asparagine).

This sequence belongs to the leguminous lectin family. In terms of processing, glycosylated in a boron-dependent manner. Glycosylation is required for localization to symbiosomes. 3 different glycosylation variants, NLEC-1A, NLEC-1B and NLEC-1C, have been identified. Expressed in nodules of Rhizobium-infected and uninfected roots and in the root stele near the nodule attachment point. In roots which have been colonized by the endomycorrhizal fungus G.versiforme, detected only in cortical cells colonized by the fungus, mainly those containing arbuscules.

The protein localises to the symbiosome. It is found in the peribacteroid space. It localises to the peribacteroid membrane. Functionally, involved in symbiosome development. The sequence is that of Nodule lectin (NLEC1) from Pisum sativum (Garden pea).